Here is a 300-residue protein sequence, read N- to C-terminus: Protein THYLAKOID FORMATION 1, chloroplastic (300 aa).

The transit peptide at 1–67 directs the protein to the chloroplast; that stretch reads MAATAISSLS…SNVTADVPPV (67 aa). The Chloroplast intermembrane segment spans residues 68–196; sequence SETKSKFLKA…IAGRAGSKEG (129 aa). The helical transmembrane segment at 197–219 threads the bilayer; the sequence is FSYSRFFAVGLFRLLELASATDP. Residues 220-300 lie on the Cytoplasmic side of the membrane; that stretch reads TVLDKLCASL…NPSFLVERKS (81 aa). The stretch at 239 to 268 forms a coiled coil; it reads DLDVYRNLLSKLVQAKELLKEYVEREKKKQ.

It belongs to the THF1 family. Interacts with GPA1. Ubiquitous. Present at higher level in hypocotyls (at protein level). Ubiquitously expressed in all organs, in roots of both light-grown and dark-grown seedlings. Highly expressed in the root apical meristems.

It localises to the plastid. The protein localises to the chloroplast outer membrane. The protein resides in the chloroplast stroma. In terms of biological role, involved in a dynamic process of vesicle-mediated thylakoid membrane biogenesis. Required for the normal organization of vesicles into mature thylakoid stacks and ultimately for leaf development. Also involved in a sugar-signaling mechanism in roots by mediating signaling between the plasma membrane and the plastid. Probably acts downstream of the plasma membrane-delimited heterotrimeric G-protein GPA1 in a D-glucose signaling pathway. The polypeptide is Protein THYLAKOID FORMATION 1, chloroplastic (THF1) (Arabidopsis thaliana (Mouse-ear cress)).